We begin with the raw amino-acid sequence, 327 residues long: Spermidine/putrescine import ATP-binding protein PotA (327 aa).

The 231-residue stretch at Ile-5 to Ile-235 folds into the ABC transporter domain. An ATP-binding site is contributed by Gly-37–Thr-44.

It belongs to the ABC transporter superfamily. Spermidine/putrescine importer (TC 3.A.1.11.1) family. As to quaternary structure, the complex is composed of two ATP-binding proteins (PotA), two transmembrane proteins (PotB and PotC) and a solute-binding protein (PotD).

The protein resides in the cell membrane. It catalyses the reaction ATP + H2O + polyamine-[polyamine-binding protein]Side 1 = ADP + phosphate + polyamineSide 2 + [polyamine-binding protein]Side 1.. Part of the ABC transporter complex PotABCD involved in spermidine/putrescine import. Responsible for energy coupling to the transport system. This Bacillus thuringiensis subsp. konkukian (strain 97-27) protein is Spermidine/putrescine import ATP-binding protein PotA.